Consider the following 234-residue polypeptide: Ribonuclease Trv (234 aa).

Intrachain disulfides connect Cys5–Cys24, Cys13–Cys59, Cys23–Cys125, Cys67–Cys117, and Cys189–Cys224. Asn15 carries N-linked (GlcNAc...) asparagine glycosylation. Residue His52 is part of the active site. Asn75 carries N-linked (GlcNAc...) asparagine glycosylation. Catalysis depends on residues Glu110 and His114.

Belongs to the RNase T2 family.

The enzyme catalyses a ribonucleotidyl-ribonucleotide-RNA + H2O = a 3'-end 3'-phospho-ribonucleotide-RNA + a 5'-end dephospho-ribonucleoside-RNA + H(+). Functionally, this is a base non-specific and adenylic acid preferential ribonuclease. The sequence is that of Ribonuclease Trv from Hypocrea rufa (Trichoderma viride).